A 362-amino-acid polypeptide reads, in one-letter code: MKPLLHAFAPGVMALMLLLPQAAQAKEVAPQQKLSNVVILATGGTIAGAGASAANSATYTAAKVPVDQLLASVPQLKDIANVRGEQVFQIASESFTNENLLELGKTVAKLADSDDVDGIVITHGTDTLEETAYFLTLVEHTEKPIVVVGSMRPGTAMSADGMLNLYNAVAVAGDKSARGKGVLITMNDEILSGRDASKMVNIKTEAFKSPWGPLGMVVEGKSYWFRAPVKRHTVNSEFDIKQISALAPVEIAYSYGNVSDTAYKALAQAGAKAIIHAGTGNGSVPARVVPTLQELRKQGVQIIRSSHVNAGGFVLRNAEQPDDKNDWIVAHDLNPQKARILAAVAMTKTQDSKELQRIFWEY.

Residues methionine 1–alanine 25 form the signal peptide. The region spanning serine 35 to tyrosine 362 is the Asparaginase/glutaminase domain. The active-site Acyl-ester intermediate is the threonine 45. Substrate is bound by residues serine 92 and threonine 125–aspartate 126.

This sequence belongs to the asparaginase 1 family. As to quaternary structure, homotetramer.

The protein resides in the periplasm. It catalyses the reaction L-glutamine + H2O = L-glutamate + NH4(+). It carries out the reaction L-asparagine + H2O = L-aspartate + NH4(+). This chain is Glutaminase-asparaginase (ansB), found in Pseudomonas aeruginosa (strain ATCC 15692 / DSM 22644 / CIP 104116 / JCM 14847 / LMG 12228 / 1C / PRS 101 / PAO1).